A 5099-amino-acid polypeptide reads, in one-letter code: Malformin synthetase mlfA (5099 aa).

An adenylation 1 region spans residues 224–615 (QRHAADRPHS…CGRADTQVKL (392 aa)). One can recognise a Carrier 1 domain in the interval 756–829 (THLENEIQLA…EAASLAKVRD (74 aa)). O-(pantetheine 4'-phosphoryl)serine is present on Ser790. Residues 867-1297 (EDVFPCTSMQ…PVDSLTLLKP (431 aa)) form a condensation 1 region. The segment at 1325-1717 (DRWVNRQPDT…GRKDTQVKLR (393 aa)) is adenylation 2. The 78-residue stretch at 1857–1934 (ARAPELERTL…QIATQCEGIA (78 aa)) folds into the Carrier 2 domain. Residue Ser1894 is modified to O-(pantetheine 4'-phosphoryl)serine. A disordered region spans residues 1995–2040 (MQQESSSSPAPSVSSSSSSSSAPKPLLAQPEPPTNLRDSVPEPFSL). Positions 1999 to 2017 (SSSSPAPSVSSSSSSSSAP) are enriched in low complexity. Residues 2067 to 2482 (EDIYPATPLQ…ALSPGDKKVL (416 aa)) form a condensation 2 region. Residues 2505–2897 (LSTPHAPAVC…VGRKDGQLKL (393 aa)) are adenylation 3. The 77-residue stretch at 3032 to 3108 (RPATAQERGL…RLVLHLQNTS (77 aa)) folds into the Carrier 3 domain. Ser3069 is subject to O-(pantetheine 4'-phosphoryl)serine. 2 condensation regions span residues 3125–3589 (WVHL…TYDQ) and 3610–4033 (DIYP…QQAM). The tract at residues 4058–4446 (YANREAVCAW…VGRKDSQIKF (389 aa)) is adenylation 4. The Carrier 4 domain maps to 4581–4657 (PPSTGMQQGI…DLAEHISSRV (77 aa)). Ser4618 carries the post-translational modification O-(pantetheine 4'-phosphoryl)serine. Positions 4696 to 5017 (DILPTTGFQR…LQTVVQHQNV (322 aa)) are condensation 5.

This sequence belongs to the NRP synthetase family.

It participates in secondary metabolite biosynthesis. In terms of biological role, nonribosomal peptide synthetase; part of the gene cluster that mediates the biosynthesis of malformins, cyclic pentapeptides with a disulfide bond between 2 consecutive cysteins, that show potential anti-tumor as well as antimalarial and antitrypanosomal properties. The nonribosomal peptide synthetase mlfA is responsible of the formation of the cyclic pentapeptide. The malformin biosynthesis clusters in malformin-producing fungi also contain enzymes involved in the formation of the disulfide bond between the two consecutive cysteins within malformins, in addition to additional tailoring enzymes such as methyltransferases or oxidoreductases. They are also composed of up to 4 major facilitator superfamily transporters, and transcription factors probably involved in the regulation of the expression of those clusters. In Aspergillus sclerotiicarbonarius (strain CBS 121057 / IBT 28362), this protein is Malformin synthetase mlfA.